We begin with the raw amino-acid sequence, 104 residues long: Type IV secretion system protein PtlB homolog (104 aa).

Residues 30-50 traverse the membrane as a helical segment; sequence IALLGIWFSIAFLALFPVALL.

This sequence belongs to the virB3 family.

It is found in the cell membrane. The chain is Type IV secretion system protein PtlB homolog (ptlB) from Bordetella bronchiseptica (strain ATCC BAA-588 / NCTC 13252 / RB50) (Alcaligenes bronchisepticus).